The chain runs to 547 residues: Chaperonin GroEL (547 aa).

Residues 30–33 (TLGP), K51, 87–91 (DGTTT), G415, and D496 contribute to the ATP site.

This sequence belongs to the chaperonin (HSP60) family. As to quaternary structure, forms a cylinder of 14 subunits composed of two heptameric rings stacked back-to-back. Interacts with the co-chaperonin GroES.

The protein localises to the cytoplasm. The enzyme catalyses ATP + H2O + a folded polypeptide = ADP + phosphate + an unfolded polypeptide.. In terms of biological role, together with its co-chaperonin GroES, plays an essential role in assisting protein folding. The GroEL-GroES system forms a nano-cage that allows encapsulation of the non-native substrate proteins and provides a physical environment optimized to promote and accelerate protein folding. The polypeptide is Chaperonin GroEL (Actinobacillus pleuropneumoniae serotype 7 (strain AP76)).